We begin with the raw amino-acid sequence, 166 residues long: Podoplanin (166 aa).

Residues 1–22 (MWTAPVLLWVLGSVWFWDSAQG) form the signal peptide. The Extracellular segment spans residues 23–135 (GAIGALEDDL…KKDGLAVVTL (113 aa)). 4 O-linked (GalNAc...) threonine glycosylation sites follow: T34, T52, T55, and T56. A compositionally biased stretch (basic and acidic residues) spans 54–63 (DTTGELDKST). The disordered stretch occupies residues 54–124 (DTTGELDKST…DNAGGETQTT (71 aa)). An O-linked (GalNAc...) serine glycan is attached at S62. T63, T71, and T80 each carry an O-linked (GalNAc...) threonine glycan. A glycan (O-linked (GalNAc...) serine) is linked at S81. O-linked (GalNAc...) threonine glycosylation occurs at T83. A glycan (O-linked (GalNAc...) serine) is linked at S84. A compositionally biased stretch (basic and acidic residues) spans 84 to 93 (SDHDHKEHES). 7 O-linked (GalNAc...) threonine glycosylation sites follow: T94, T95, T96, T101, T105, T109, and T110. Over residues 94–103 (TTTVKAVTSH) the composition is skewed to polar residues. Over residues 104–114 (STDKKTTHPNR) the composition is skewed to basic and acidic residues. A helical transmembrane segment spans residues 136 to 156 (VGIIIGVLLAIGFIGGIIIVV). Residues 137–141 (GIIIG) are requires for dimerization and lipid rafts association. Over 157–166 (MRKISGRFSP) the chain is Cytoplasmic. Residues 158–159 (RK) are requires for interaction with MSN and EZR.

This sequence belongs to the podoplanin family. In terms of assembly, homodimer. Interacts with CLEC1B; the interaction is independent of CLEC1B glycosylation and activates CLEC1B; the interaction is dependent of sialic acid on O-glycans. Interacts with CD9; this interaction is homophilic and attenuates platelet aggregation and pulmonary metastasis induced by PDPN. Interacts with LGALS8; the interaction is glycosylation-dependent; may participate in connection of the lymphatic endothelium to the surrounding extracellular matrix. Interacts with HSPA9. Interacts (via extracellular domain) with CD44; this interaction is required for PDPN-mediated directional migration and regulation of lamellipodia extension/stabilization during cell spreading and migration. Interacts (via cytoplasmic domain) with MSN and EZR; activates RHOA and promotes epithelial-mesenchymal transition. Interacts with CCL21; relocalized PDPN to the basolateral membrane. Post-translationally, extensively O-glycosylated. Contains sialic acid residues. O-glycosylation is necessary for platelet aggregation activity. Disialylated at Thr-52; sialic acid is critical for platelet-aggregating activity and for CLEC1B interaction. In terms of processing, the N-terminus is blocked. In terms of tissue distribution, in adult kidney, expressed on the urinary surface and foot processes of podocytes and in parietal epithelial cells of Bowman's capsule where it is localized to luminal surfaces. In lung, expressed exclusively on luminal surfaces of type I alveolar epithelial cells and pleural mesothelial cells. Not expressed in type II alveolar cells. In bone, expressed in osteocytes and osteoblasts. In spleen, liver, stomach and intestine, expressed in mesoepithelium. Also expressed in thymic epithelial cells, choroid plexus and leptomeninges.

It localises to the membrane. Its subcellular location is the cell projection. The protein resides in the lamellipodium membrane. It is found in the filopodium membrane. The protein localises to the microvillus membrane. It localises to the ruffle membrane. Its subcellular location is the membrane raft. The protein resides in the apical cell membrane. It is found in the basolateral cell membrane. The protein localises to the invadopodium. In terms of biological role, mediates effects on cell migration and adhesion through its different partners. During development plays a role in blood and lymphatic vessels separation by binding CLEC1B, triggering CLEC1B activation in platelets and leading to platelet activation and/or aggregation. Interaction with CD9, on the contrary, attenuates platelet aggregation and pulmonary metastasis induced by PDPN. Mediates effects on cell migration and adhesion through its different partners. Through MSN or EZR interaction promotes epithelial-mesenchymal transition (EMT) leading to ERZ phosphorylation and triggering RHOA activation leading to cell migration increase and invasiveness. Interaction with CD44 promotes directional cell migration in epithelial and tumor cells. In lymph nodes (LNs), controls fibroblastic reticular cells (FRCs) adhesion to the extracellular matrix (ECM) and contraction of the actomyosin by maintaining ERM proteins (EZR; MSN and RDX) and MYL9 activation through association with unknown transmembrane proteins. Engagement of CLEC1B by PDPN promotes FRCs relaxation by blocking lateral membrane interactions leading to reduction of ERM proteins (EZR; MSN and RDX) and MYL9 activation. Through binding with LGALS8 may participate in connection of the lymphatic endothelium to the surrounding extracellular matrix. In keratinocytes, induces changes in cell morphology showing an elongated shape, numerous membrane protrusions, major reorganization of the actin cytoskeleton, increased motility and decreased cell adhesion. Controls invadopodia stability and maturation leading to efficient degradation of the extracellular matrix (ECM) in tumor cells through modulation of RHOC activity in order to activate ROCK1/ROCK2 and LIMK1/LIMK2 and inactivation of CFL1. Required for normal lung cell proliferation and alveolus formation at birth. Does not function as a water channel or as a regulator of aquaporin-type water channels. Does not have any effect on folic acid or amino acid transport. This Rattus norvegicus (Rat) protein is Podoplanin.